Here is a 94-residue protein sequence, read N- to C-terminus: PqqA binding protein (94 aa).

It belongs to the PqqD family. In terms of assembly, monomer. Interacts with PqqE.

It functions in the pathway cofactor biosynthesis; pyrroloquinoline quinone biosynthesis. Its function is as follows. Functions as a PqqA binding protein and presents PqqA to PqqE, in the pyrroloquinoline quinone (PQQ) biosynthetic pathway. The sequence is that of PqqA binding protein from Pseudomonas syringae pv. syringae (strain B728a).